We begin with the raw amino-acid sequence, 440 residues long: SET domain-containing protein 4 (440 aa).

Positions 1-16 (MQKGKGRTSRIRRRKL) are enriched in basic residues. The interval 1 to 24 (MQKGKGRTSRIRRRKLCGSSESRG) is disordered. The SET domain occupies 48 to 273 (SNLAPACFPG…KHEEVFICYG (226 aa)). Y272 is a binding site for S-adenosyl-L-methionine.

Belongs to the class V-like SAM-binding methyltransferase superfamily. SETD4 family. Forms a ternary complex with TBK1 and ZNF268; the interaction with TBK1 is ZNF268-dependent and leads to TBK1 monomethylation.

It localises to the cytoplasm. The protein localises to the cytosol. It is found in the nucleus. The enzyme catalyses L-lysyl(4)-[histone H3] + S-adenosyl-L-methionine = N(6)-methyl-L-lysyl(4)-[histone H3] + S-adenosyl-L-homocysteine + H(+). The catalysed reaction is N(6)-methyl-L-lysyl(4)-[histone H3] + S-adenosyl-L-methionine = N(6),N(6)-dimethyl-L-lysyl(4)-[histone H3] + S-adenosyl-L-homocysteine + H(+). It carries out the reaction L-lysyl(20)-[histone H4] + S-adenosyl-L-methionine = N(6)-methyl-L-lysyl(20)-[histone H4] + S-adenosyl-L-homocysteine + H(+). It catalyses the reaction N(6)-methyl-L-lysyl(20)-[histone H4] + S-adenosyl-L-methionine = N(6),N(6)-dimethyl-L-lysyl(20)-[histone H4] + S-adenosyl-L-homocysteine + H(+). The enzyme catalyses N(6),N(6)-dimethyl-L-lysyl(20)-[histone H4] + S-adenosyl-L-methionine = N(6),N(6),N(6)-trimethyl-L-lysyl(20)-[histone H4] + S-adenosyl-L-homocysteine + H(+). The catalysed reaction is L-lysyl-[protein] + S-adenosyl-L-methionine = N(6)-methyl-L-lysyl-[protein] + S-adenosyl-L-homocysteine + H(+). Functionally, protein-lysine N-methyltransferase that methylates both histones and non-histone proteins. Via its catalytic activity, regulates many processes, including cell proliferation, cell differentiation, inflammatory response and apoptosis. Regulates the inflammatory response by mediating mono- and dimethylation of 'Lys-4' of histone H3 (H3K4me1 and H3K4me2, respectively), leading to activate the transcription of pro-inflammatory cytokines IL6 and TNF-alpha. Through the catalysis of TBK1 monomethylation, may regulate virus-induced interferon signaling. TBK1 monomethylation enhances its interaction with MAVS, STING and IRF3, hence promoting antiviral interferon signaling. Also involved in the regulation of stem cell quiescence by catalyzing the trimethylation of 'Lys-20' of histone H4 (H4K20me3), thereby promoting heterochromatin formation. In the brain, epigenetically controls quiescence of neural stem cells for sustaining a protected neural stem cell population and maintaining a stem cell reservoir for neurogenesis. Involved in proliferation, migration, paracrine and myogenic differentiation of bone marrow mesenchymal stem cells (BMSCs). Through the catalysis of XRCC5/Ku70 trimethylation, regulates BAX-mediated apoptosis. SETD4-catalyzed XRCC5 methylation results in XRCC5 translocation to the cytoplasm, where it interacts with BAX, sequestering it from the mitochondria, hence preventing BAX-mediated apoptosis. The chain is SET domain-containing protein 4 from Homo sapiens (Human).